Here is a 131-residue protein sequence, read N- to C-terminus: Probable flagellum biosynthesis repressor protein FlbT (131 aa).

Belongs to the FlbT family.

Has a post-transcriptional repressor function in flagellum biogenesis. Associates with the 5'-UTR of fljK mRNA and promotes its degradation. This Caulobacter sp. (strain K31) protein is Probable flagellum biosynthesis repressor protein FlbT.